The primary structure comprises 175 residues: Snake venom metalloproteinase BpMP-1 (175 aa).

The Peptidase M12B domain occupies Tyr-1–Lys-175. Positions 3 and 74 each coordinate Ca(2+). Disulfide bonds link Cys-98-Cys-171, Cys-131-Cys-155, and Cys-133-Cys-138. His-117 is a Zn(2+) binding site. Glu-118 is an active-site residue. His-121 and His-127 together coordinate Zn(2+). Cys-171 and Asn-174 together coordinate Ca(2+).

This sequence belongs to the venom metalloproteinase (M12B) family. P-I subfamily. Monomer. Requires Zn(2+) as cofactor. Expressed by the venom gland.

It localises to the secreted. Its activity is regulated as follows. Inhibited by EDTA, 1,10-phenanthroline and beta-mercaptoethanol. Not inhibited by the serine protease inhibitors aprotinin and benzamidin. In terms of biological role, non-hemorrhagic snake venom zinc metalloprotease that hydrolyzes the Aalpha-chain of fibrinogen, more slowly the Bbeta-chain and shows no effect on the gamma chain. Has no coagulant activity on bovine plasma and fibrinogen. The polypeptide is Snake venom metalloproteinase BpMP-1 (Bothrops pauloensis (Neuwied's lancehead)).